We begin with the raw amino-acid sequence, 478 residues long: Cytochrome c-552 (478 aa).

The N-terminal stretch at 1–26 (MARKTLRARRFFSLIFPFFFITSVYA) is a signal peptide. H94 is a heme c binding site. Residues C122, C125, and K126 each contribute to the heme site. Heme c contacts are provided by C160, C163, H164, C209, C212, and H213. E215, Y216, K261, and Q263 together coordinate Ca(2+). Y216 serves as a coordination point for substrate. H264 provides a ligand contact to substrate. Heme c is bound by residues H275, C282, C285, H286, H301, C314, C317, H318, and H393.

Belongs to the cytochrome c-552 family. Ca(2+) is required as a cofactor. It depends on heme c as a cofactor.

It is found in the periplasm. The enzyme catalyses 6 Fe(III)-[cytochrome c] + NH4(+) + 2 H2O = 6 Fe(II)-[cytochrome c] + nitrite + 8 H(+). It functions in the pathway nitrogen metabolism; nitrate reduction (assimilation). In terms of biological role, catalyzes the reduction of nitrite to ammonia, consuming six electrons in the process. In Salmonella paratyphi C (strain RKS4594), this protein is Cytochrome c-552.